Here is a 231-residue protein sequence, read N- to C-terminus: Thermonuclease (231 aa).

Residues 1 to 26 (MLVMTEYLLSAGICMAIVSILLIGMA) form the signal peptide. 2 consecutive propeptides follow at residues 27–63 (ISNV…SANA) and 64–82 (SQTD…TVYS). Positions 61–73 (ANASQTDNGVNRS) are enriched in polar residues. Positions 61 to 86 (ANASQTDNGVNRSGSEDPTVYSATST) are disordered. A Ca(2+)-binding site is contributed by Asp103. Residue Arg117 is part of the active site. Positions 122 and 123 each coordinate Ca(2+). Residues Glu125 and Arg169 contribute to the active site. The span at 203–219 (HEQHLRKSEAQAKKEKL) shows a compositional bias: basic and acidic residues. The tract at residues 203–231 (HEQHLRKSEAQAKKEKLNIWSEDNADSGQ) is disordered.

The protein belongs to the thermonuclease family. Ca(2+) is required as a cofactor.

It is found in the secreted. Its subcellular location is the membrane. The catalysed reaction is Endonucleolytic cleavage to nucleoside 3'-phosphates and 3'-phosphooligonucleotide end-products.. Functionally, enzyme that catalyzes the hydrolysis of both DNA and RNA at the 5' position of the phosphodiester bond. The polypeptide is Thermonuclease (Staphylococcus aureus).